Consider the following 294-residue polypeptide: Mating type protein mtA-1 (294 aa).

The segment at residues 46–101 is a DNA-binding region (alpha box); sequence TAKKKVNGFMGFRSNYSPLFSYLPQKMRSPFMTILWQYDPYHNEWDFMCSVYSSIR.

It belongs to the MATALPHA1 family.

It is found in the nucleus. Functionally, mating type proteins are sequence specific DNA-binding proteins that act as master switches in fungal differentiation by controlling gene expression in a cell type-specific fashion. Transcriptional activator that induces the transcription of alpha-specific genes. In Sordaria equina, this protein is Mating type protein mtA-1 (MTA1).